The following is a 119-amino-acid chain: Large ribosomal subunit protein bL19 (119 aa).

Belongs to the bacterial ribosomal protein bL19 family.

In terms of biological role, this protein is located at the 30S-50S ribosomal subunit interface and may play a role in the structure and function of the aminoacyl-tRNA binding site. The polypeptide is Large ribosomal subunit protein bL19 (Limosilactobacillus reuteri (strain DSM 20016) (Lactobacillus reuteri)).